Here is a 365-residue protein sequence, read N- to C-terminus: MAAATPLLKDELDIVIPTIRNLDFLEMWRPFFQPYHLIIVQDGDPSKIIKVPEGFDYELYNRNDINRILGPKASCISFKDSACRCFGYMVSKKKYIYTIDDDCFVAKDPSGKDINALEQHIKNLLCPSTPHFFNTLYDPYRDGADFVRGYPFSMREGAPTAVSHGLWLNIPDYDAPTQLVKPHERNTRYVDAVMTIPKGTLFPMCGMNLAFDRDLIGPAMYFGLMGDGQPIGRYDDMWAGWCTKVICDHLGLGIKTGLPYIWHSKASNPFVNLKKEYNGIFWQEEIIPFFQAATLPKECTTVQQCYLELSKQVKKKLSSIDPYFTKLGEAMVTWIEAWDELNLLGTTWLSCLSPMVQQRLKSRCY.

A DXD motif motif is present at residues 100-102; sequence DDD. N-linked (Glc...) arginine glycosylation occurs at Arg148.

This sequence belongs to the RGP family. In terms of assembly, homopentamer or homohexamer. Requires Mn(2+) as cofactor. It depends on Mg(2+) as a cofactor. In terms of processing, reversibly glycosylated by UDP-glucose, UDP-xylose and UDP-galactose, but not UDP-mannose. In terms of tissue distribution, expressed in all tissues tested, including root, tuber, leaf, petiole, shoot, stolon and stem.

Its subcellular location is the secreted. It is found in the cell wall. The protein localises to the cell junction. The protein resides in the plasmodesma. It localises to the golgi apparatus. The enzyme catalyses UDP-beta-L-arabinofuranose = UDP-beta-L-arabinopyranose. Functionally, probable UDP-L-arabinose mutase involved in the biosynthesis of cell wall non-cellulosic polysaccharides. Was initially shown to possess an autoglycosylating activity which is dependent on the presence of UDP-glucose and manganese. This chain is Probable UDP-arabinopyranose mutase 1, found in Solanum tuberosum (Potato).